Reading from the N-terminus, the 141-residue chain is Large ribosomal subunit protein uL16 (141 aa).

Belongs to the universal ribosomal protein uL16 family. Part of the 50S ribosomal subunit.

Binds 23S rRNA and is also seen to make contacts with the A and possibly P site tRNAs. The sequence is that of Large ribosomal subunit protein uL16 from Nostoc punctiforme (strain ATCC 29133 / PCC 73102).